Consider the following 240-residue polypeptide: UDP-2,3-diacylglucosamine hydrolase (240 aa).

Residues aspartate 8, histidine 10, aspartate 41, asparagine 79, and histidine 114 each contribute to the Mn(2+) site. 79–80 (NR) contacts substrate. 5 residues coordinate substrate: aspartate 122, serine 160, threonine 164, lysine 167, and histidine 195. Mn(2+) contacts are provided by histidine 195 and histidine 197.

It belongs to the LpxH family. The cofactor is Mn(2+).

The protein resides in the cell inner membrane. It carries out the reaction UDP-2-N,3-O-bis[(3R)-3-hydroxytetradecanoyl]-alpha-D-glucosamine + H2O = 2-N,3-O-bis[(3R)-3-hydroxytetradecanoyl]-alpha-D-glucosaminyl 1-phosphate + UMP + 2 H(+). It participates in glycolipid biosynthesis; lipid IV(A) biosynthesis; lipid IV(A) from (3R)-3-hydroxytetradecanoyl-[acyl-carrier-protein] and UDP-N-acetyl-alpha-D-glucosamine: step 4/6. In terms of biological role, hydrolyzes the pyrophosphate bond of UDP-2,3-diacylglucosamine to yield 2,3-diacylglucosamine 1-phosphate (lipid X) and UMP by catalyzing the attack of water at the alpha-P atom. Involved in the biosynthesis of lipid A, a phosphorylated glycolipid that anchors the lipopolysaccharide to the outer membrane of the cell. The protein is UDP-2,3-diacylglucosamine hydrolase of Pseudomonas aeruginosa (strain UCBPP-PA14).